Reading from the N-terminus, the 1202-residue chain is MNFDASNDRPLKKRRFFVDDPLDTAVTPAEKSPALDASSSASTHTDPNYSANGSPAQIQTQQEYNFSNGGHATQPATAAGTRTHQAQSPAHDTLSDFDTEAFVSIVGEQVSPETLSQIRKLSDGSLEKAINVYFDGSWKNAGSPGSSQTTLLSCERNASRPSPLHTSREQGTGPAENGADSVTEPISRSKLQPARRYLGAFGVEAWATRSGIGLIKHGDTVNIERARSQPLSTRGRTGKLRVNQKGDVLTRFTNTAGQEIGRLPRETAEWVSTLLDQKICEFRGVCVFAPDRLRVNDTIYLQLRCFMRIEAFQPKELPQKQDDNRATTIFEQEESAEEKQLRLRQVALVQLFDEIGLKSTTQDDEIKKQRKEGLLRAAEMADQEAKKLAKSGNTDSGDEEPAELEQDQLDALYKKAQSFDFSMPEAQPPSSFAMDLRKYQKQALYWMLSKEKDKKSGREVSIHPLWEEYDWPLKDVDDKDLPIIEGINHFYVNPYSGELSLDFPAQEQHCLGGILADEMGLGKTIEMLSLVHSHRNLPPTQSLGNLTRLPVSGVVPAPYTTLVVAPMSLLAQWEGEALKASRNGSMKVLMYYGNEKNVNLREMCSAGNAAAPNMILTSYGVVMSEHRTHQALAPGTSWTPGNLFSVDFFRVILDEAHIIKNRRSKTARACYDLKATHRWVLTGTPIVNRLEDLFSLVRFLRVEPWNNFSFWKTFITAPFESKEVVRAISVVQTVLEPLVLRRTKSMKTPEGEPLVPLPKRTIRIEKVELIEQEREIYNHIYTRAKQTFNSNVAAGTLLKSYSTIFAQLLRLRQTCCHPILTRNKAIVADEEDAAAAADQDSDLKDDMDLQELINRFTATTSDAESSNEPPDPSMKFTAHALRQIQTESAGECPICSEEPMIDPAVTACWHSACKGCLKDYIQHQRDKGVQPRCFSCRADLNPQDIFEVVRYQSPNTTPTEQTPSSIGGDNVYSSSQPPPPPRISLRRINPLSPSAHTSAKIHALLAHLVRVPAGTKSVVFSQFTSFLDLIGPQLTKAGISFVRLDGTMAQKARAEVLAQFTKFETFTQEELDQAESTSAPSGLTPTPKTPKQSSSPSSPTVLLISLKAGGVGLNLTAASNVFMMDPWWSFAIEAQAIDRVHRMGQLRDVNVVRFIVKDSIEERMLRVQERKMGIAGSLGLMGEGNEEERRKERIEELRLLFE.

A compositionally biased stretch (basic and acidic residues) spans 1 to 10; it reads MNFDASNDRP. 3 disordered regions span residues 1–90, 137–187, and 382–403; these read MNFD…QSPA, SWKN…EPIS, and DQEA…EPAE. Polar residues-rich tracts occupy residues 37-90 and 143-152; these read ASSS…QSPA and SPGSSQTTLL. In terms of domain architecture, Helicase ATP-binding spans 504–703; that stretch reads PAQEQHCLGG…FSLVRFLRVE (200 aa). 517-524 serves as a coordination point for ATP; that stretch reads DEMGLGKT. The DEAH box motif lies at 654 to 657; that stretch reads DEAH. The segment at 892–937 adopts an RING-type zinc-finger fold; that stretch reads CPICSEEPMIDPAVTACWHSACKGCLKDYIQHQRDKGVQPRCFSCR. Composition is skewed to polar residues over residues 952–967 and 1074–1083; these read QSPN…SSIG and AESTSAPSGL. 2 disordered regions span residues 952–981 and 1071–1097; these read QSPN…PPPP and LDQA…SSPS. The 196-residue stretch at 1003–1198 folds into the Helicase C-terminal domain; that stretch reads ALLAHLVRVP…RRKERIEELR (196 aa). Over residues 1084-1097 the composition is skewed to low complexity; sequence TPTPKTPKQSSSPS.

Belongs to the SNF2/RAD54 helicase family.

The protein localises to the cytoplasm. It is found in the nucleus. In terms of biological role, probable helicase, member of the UBC2/RAD6 epistasis group. Functions with DNA repair protein RAD18 in error-free postreplication DNA repair. Involved in the maintenance of wild-type rates of instability of simple repetitive sequences such as poly(GT) repeats. Seems to be involved in maintaining a balance which acts in favor of error-prone non-homologous joining during DNA double-strand breaks repairs. In Emericella nidulans (strain FGSC A4 / ATCC 38163 / CBS 112.46 / NRRL 194 / M139) (Aspergillus nidulans), this protein is DNA repair protein rad5 (rad5).